The sequence spans 232 residues: 2,3,4,5-tetrahydropyridine-2,6-dicarboxylate N-acetyltransferase (232 aa).

Belongs to the transferase hexapeptide repeat family. DapH subfamily.

It carries out the reaction (S)-2,3,4,5-tetrahydrodipicolinate + acetyl-CoA + H2O = L-2-acetamido-6-oxoheptanedioate + CoA. Its pathway is amino-acid biosynthesis; L-lysine biosynthesis via DAP pathway; LL-2,6-diaminopimelate from (S)-tetrahydrodipicolinate (acetylase route): step 1/3. Functionally, catalyzes the transfer of an acetyl group from acetyl-CoA to tetrahydrodipicolinate. This chain is 2,3,4,5-tetrahydropyridine-2,6-dicarboxylate N-acetyltransferase, found in Streptococcus uberis (strain ATCC BAA-854 / 0140J).